Reading from the N-terminus, the 856-residue chain is Leucine--tRNA ligase (856 aa).

A 'HIGH' region motif is present at residues 53-63 (PYPSGNLHMGH). The 'KMSKS' region signature appears at 622–626 (KMSKS). An ATP-binding site is contributed by Lys625.

Belongs to the class-I aminoacyl-tRNA synthetase family.

Its subcellular location is the cytoplasm. It carries out the reaction tRNA(Leu) + L-leucine + ATP = L-leucyl-tRNA(Leu) + AMP + diphosphate. The sequence is that of Leucine--tRNA ligase from Prochlorococcus marinus (strain MIT 9215).